The sequence spans 87 residues: Transcription factor ILI4 (87 aa).

The bHLH domain maps to 1–54 (MSSRRSSRSSVSEEEINELISKLQSLLPSSRRRGANQASTTKLLKETCSYIKSL).

It belongs to the bHLH protein family. Interacts with LO9-177. As to expression, expressed in phloem of leaf blades and sheaths, lamina joints, filaments before anthesis, vasculare bundles of the ovule, lemma and palea, and embryos.

Its subcellular location is the cytoplasm. Functionally, atypical and probable non DNA-binding bHLH transcription factor that acts as a positive regulator of brassinosteroid (BR) response. Controls lamina inclination by participating in two BR signaling pathways involving BRI1 and RGA1. Involved in the RLI1-dependent modulation of leaf inclination by promoting lamina joint cell elongation, especially in response to phosphate (Pi) availability. In Oryza sativa subsp. japonica (Rice), this protein is Transcription factor ILI4 (ILI4).